Here is a 272-residue protein sequence, read N- to C-terminus: Shikimate dehydrogenase (NADP(+)) (272 aa).

Shikimate-binding positions include 14-16 (SRS) and Thr-61. Catalysis depends on Lys-65, which acts as the Proton acceptor. NADP(+) is bound at residue Glu-77. Positions 86 and 102 each coordinate shikimate. Residues 126 to 130 (GVGGA), 149 to 154 (NRTFPR), and Met-213 each bind NADP(+). Tyr-215 contributes to the shikimate binding site. Residue Gly-237 coordinates NADP(+).

Belongs to the shikimate dehydrogenase family. As to quaternary structure, homodimer.

It catalyses the reaction shikimate + NADP(+) = 3-dehydroshikimate + NADPH + H(+). It participates in metabolic intermediate biosynthesis; chorismate biosynthesis; chorismate from D-erythrose 4-phosphate and phosphoenolpyruvate: step 4/7. Functionally, involved in the biosynthesis of the chorismate, which leads to the biosynthesis of aromatic amino acids. Catalyzes the reversible NADPH linked reduction of 3-dehydroshikimate (DHSA) to yield shikimate (SA). The polypeptide is Shikimate dehydrogenase (NADP(+)) (Sodalis glossinidius (strain morsitans)).